A 35-amino-acid polypeptide reads, in one-letter code: Photosystem II reaction center protein T (35 aa).

Residues 3–23 (ALVYTFLLVSTLGIIFFAIFF) form a helical membrane-spanning segment.

The protein belongs to the PsbT family. As to quaternary structure, PSII is composed of 1 copy each of membrane proteins PsbA, PsbB, PsbC, PsbD, PsbE, PsbF, PsbH, PsbI, PsbJ, PsbK, PsbL, PsbM, PsbT, PsbY, PsbZ, Psb30/Ycf12, at least 3 peripheral proteins of the oxygen-evolving complex and a large number of cofactors. It forms dimeric complexes.

It is found in the plastid. The protein localises to the chloroplast thylakoid membrane. In terms of biological role, found at the monomer-monomer interface of the photosystem II (PS II) dimer, plays a role in assembly and dimerization of PSII. PSII is a light-driven water plastoquinone oxidoreductase, using light energy to abstract electrons from H(2)O, generating a proton gradient subsequently used for ATP formation. This chain is Photosystem II reaction center protein T, found in Cedrus deodara (Deodar cedar).